Consider the following 354-residue polypeptide: Uroporphyrinogen decarboxylase (354 aa).

Substrate is bound by residues 30–34, Asp-79, Tyr-154, Ser-209, and His-333; that span reads RQAGR.

The protein belongs to the uroporphyrinogen decarboxylase family. In terms of assembly, homodimer.

Its subcellular location is the cytoplasm. The catalysed reaction is uroporphyrinogen III + 4 H(+) = coproporphyrinogen III + 4 CO2. The protein operates within porphyrin-containing compound metabolism; protoporphyrin-IX biosynthesis; coproporphyrinogen-III from 5-aminolevulinate: step 4/4. In terms of biological role, catalyzes the decarboxylation of four acetate groups of uroporphyrinogen-III to yield coproporphyrinogen-III. The protein is Uroporphyrinogen decarboxylase of Mycobacterium sp. (strain JLS).